The primary structure comprises 122 residues: Large ribosomal subunit protein uL14 (122 aa).

This sequence belongs to the universal ribosomal protein uL14 family. In terms of assembly, part of the 50S ribosomal subunit. Forms a cluster with proteins L3 and L19. In the 70S ribosome, L14 and L19 interact and together make contacts with the 16S rRNA in bridges B5 and B8.

Functionally, binds to 23S rRNA. Forms part of two intersubunit bridges in the 70S ribosome. This chain is Large ribosomal subunit protein uL14, found in Azoarcus sp. (strain BH72).